Consider the following 343-residue polypeptide: 4-hydroxy-2-oxovalerate aldolase 4 (343 aa).

The Pyruvate carboxyltransferase domain maps to 8–260 (VTVHDMTLRD…ETGVDVAKIT (253 aa)). 16–17 (RD) is a binding site for substrate. Position 17 (D17) interacts with Mn(2+). H20 serves as the catalytic Proton acceptor. The substrate site is built by S170 and H199. H199 and H201 together coordinate Mn(2+). Y290 contacts substrate.

This sequence belongs to the 4-hydroxy-2-oxovalerate aldolase family.

The catalysed reaction is (S)-4-hydroxy-2-oxopentanoate = acetaldehyde + pyruvate. The sequence is that of 4-hydroxy-2-oxovalerate aldolase 4 from Dechloromonas aromatica (strain RCB).